The sequence spans 230 residues: MEKIRVKEIFDNVYSVDFGDGLKRIATKSLVPGKRVYGEKLVYSDSIEYRIWNPNKSKLGAAIINGLKKMPIKKGEKVLYLGASAGTTPSHVADIAENSLVYALEFAPRIMREFIDSCNERKNLIPVLGDANRPQDYSNIVEKVDVIFEDVAQPNQAEILVKNAKWFLKENGYAMISIKARSVDVTKNPREIFAEQKKILIEGGFEIVDEVNIEPFEKDHMMMVGIWKGN.

S-adenosyl-L-methionine contacts are provided by residues 87–88 (TT), 105–106 (EF), 130–131 (DA), and 150–153 (DVAQ).

The protein belongs to the methyltransferase superfamily. Fibrillarin family. As to quaternary structure, interacts with nop5. Component of box C/D small ribonucleoprotein (sRNP) particles that contain rpl7ae, FlpA and nop5, plus a guide RNA.

Its function is as follows. Involved in pre-rRNA and tRNA processing. Utilizes the methyl donor S-adenosyl-L-methionine to catalyze the site-specific 2'-hydroxyl methylation of ribose moieties in rRNA and tRNA. Site specificity is provided by a guide RNA that base pairs with the substrate. Methylation occurs at a characteristic distance from the sequence involved in base pairing with the guide RNA. This is Fibrillarin-like rRNA/tRNA 2'-O-methyltransferase from Methanococcus maripaludis (strain DSM 14266 / JCM 13030 / NBRC 101832 / S2 / LL).